Here is a 124-residue protein sequence, read N- to C-terminus: Small ribosomal subunit protein uS12c (124 aa).

Belongs to the universal ribosomal protein uS12 family. Part of the 30S ribosomal subunit.

The protein localises to the plastid. The protein resides in the chloroplast. Functionally, with S4 and S5 plays an important role in translational accuracy. Located at the interface of the 30S and 50S subunits. This Ostreococcus tauri protein is Small ribosomal subunit protein uS12c (rps12).